Reading from the N-terminus, the 333-residue chain is HTH-type transcriptional regulator pepR1 (333 aa).

The HTH lacI-type domain maps to 6 to 60; that stretch reads VTIYDVAREAKVSMATVSRVVNGNNNVRKETRDRVMEVIKRLHYQPNAVAQGLAS. The segment at residues 8–27 is a DNA-binding region (H-T-H motif); that stretch reads IYDVAREAKVSMATVSRVVN.

Functionally, transcriptional regulator of the pepQ gene for prolidase. The protein is HTH-type transcriptional regulator pepR1 (pepR1) of Lactobacillus delbrueckii subsp. lactis.